The following is a 251-amino-acid chain: Imidazole glycerol phosphate synthase subunit HisF (251 aa).

Residues Asp-11 and Asp-130 contribute to the active site.

It belongs to the HisA/HisF family. In terms of assembly, heterodimer of HisH and HisF.

It is found in the cytoplasm. It carries out the reaction 5-[(5-phospho-1-deoxy-D-ribulos-1-ylimino)methylamino]-1-(5-phospho-beta-D-ribosyl)imidazole-4-carboxamide + L-glutamine = D-erythro-1-(imidazol-4-yl)glycerol 3-phosphate + 5-amino-1-(5-phospho-beta-D-ribosyl)imidazole-4-carboxamide + L-glutamate + H(+). Its pathway is amino-acid biosynthesis; L-histidine biosynthesis; L-histidine from 5-phospho-alpha-D-ribose 1-diphosphate: step 5/9. Its function is as follows. IGPS catalyzes the conversion of PRFAR and glutamine to IGP, AICAR and glutamate. The HisF subunit catalyzes the cyclization activity that produces IGP and AICAR from PRFAR using the ammonia provided by the HisH subunit. This is Imidazole glycerol phosphate synthase subunit HisF from Listeria welshimeri serovar 6b (strain ATCC 35897 / DSM 20650 / CCUG 15529 / CIP 8149 / NCTC 11857 / SLCC 5334 / V8).